The sequence spans 181 residues: ADP-ribosylation factor-like protein 1 (181 aa).

Gly2 carries the N-myristoyl glycine lipid modification. GTP is bound by residues 24 to 31 (GLDGAGKT), 45 to 48 (TIPT), Gly70, 126 to 129 (NKQD), and 160 to 161 (AT). Mg(2+) contacts are provided by Thr31 and Thr48.

Belongs to the small GTPase superfamily. Arf family. As to quaternary structure, the GTP-bound form interacts with GOLGA1. The GTP-bound form interacts with GOLGA4 and RGPD8. The GTP-bound form directly interacts with ARFIP2. Binds to SCOC, preferentially in its GTP-bound form. May interact with UNC119. Interacts with ARFIP1; this interaction directs ARFIP1 to the trans-Golgi membranes. Interacts with ARFGEF1 (via N-terminus). In terms of tissue distribution, detected in heart, liver, lung and liver (at protein level). Detected in fetal heart, lung, liver and kidney. Detected in adult heart, placenta, lung, liver, skeletal muscle, kidney and pancreas.

Its subcellular location is the golgi apparatus membrane. It is found in the golgi apparatus. It localises to the trans-Golgi network membrane. The protein localises to the membrane. Its function is as follows. GTP-binding protein that recruits several effectors, such as golgins, arfaptins and Arf-GEFs to the trans-Golgi network, and modulates their functions at the Golgi complex. Plays thereby a role in a wide range of fundamental cellular processes, including cell polarity, innate immunity, or protein secretion mediated by arfaptins, which were shown to play a role in maintaining insulin secretion from pancreatic beta cells. The polypeptide is ADP-ribosylation factor-like protein 1 (ARL1) (Homo sapiens (Human)).